The sequence spans 261 residues: Putative hydro-lyase SH0274 (261 aa).

The protein belongs to the D-glutamate cyclase family.

The chain is Putative hydro-lyase SH0274 from Staphylococcus haemolyticus (strain JCSC1435).